A 189-amino-acid chain; its full sequence is Ribosome-recycling factor (189 aa).

It belongs to the RRF family.

Its subcellular location is the cytoplasm. Functionally, responsible for the release of ribosomes from messenger RNA at the termination of protein biosynthesis. May increase the efficiency of translation by recycling ribosomes from one round of translation to another. This chain is Ribosome-recycling factor, found in Salinibacter ruber (strain DSM 13855 / M31).